The primary structure comprises 484 residues: PTS system MurNAc-GlcNAc-specific EIIBC component (484 aa).

A PTS EIIB type-1 domain is found at 5–87 (QQLAERIIAA…AELSGVKLGD (83 aa)). Catalysis depends on Cys27, which acts as the Phosphocysteine intermediate; for EIIB activity. A PTS EIIC type-1 domain is found at 130-484 (KSIANIFIPL…AMRQTDLLGD (355 aa)). The next 10 membrane-spanning stretches (helical) occupy residues 135 to 155 (IFIP…IAAV), 160 to 180 (MVAG…FNVI), 200 to 220 (FGAT…TGIA), 234 to 254 (LQPG…LSIV), 274 to 294 (IALL…AGFV), 305 to 325 (IISI…LPLV), 349 to 369 (LLPI…ALWV), 384 to 404 (ALPV…TLPL), 408 to 428 (FLTA…IGHI), and 450 to 470 (LGYI…TYLF).

The protein localises to the cell membrane. The enzyme catalyses N-acetyl-beta-D-muramate-(1-&gt;4)-N-acetyl-D-glucosamine(out) + N(pros)-phospho-L-histidyl-[protein] = 6-phospho-N-acetyl-beta-D-muramate-(1-&gt;4)-N-acetyl-D-glucosamine(in) + L-histidyl-[protein]. It functions in the pathway cell wall biogenesis; peptidoglycan recycling. The phosphoenolpyruvate-dependent sugar phosphotransferase system (sugar PTS), a major carbohydrate active transport system, catalyzes the phosphorylation of incoming sugar substrates concomitantly with their translocation across the cell membrane. This system is involved in the uptake and phosphorylation of MurNAc-GlcNAc, the principle peptidoglycan turnover product of S.aureus, yielding cytoplasmic MurNAc 6P-GlcNAc. The protein is PTS system MurNAc-GlcNAc-specific EIIBC component of Staphylococcus aureus (strain bovine RF122 / ET3-1).